Reading from the N-terminus, the 385-residue chain is Trans-enoyl reductase poxH (385 aa).

64-67 is an NADP(+) binding site; sequence QPYS. Residue 156–163 coordinates substrate; that stretch reads PDPAAPPI. NADP(+)-binding positions include 199–202, 223–226, tyrosine 241, and 289–290; these read STSV, SGTD, and LG. 309-313 provides a ligand contact to substrate; that stretch reads HMAPL. 372 to 373 lines the NADP(+) pocket; the sequence is KR.

This sequence belongs to the zinc-containing alcohol dehydrogenase family. As to quaternary structure, monomer.

It functions in the pathway secondary metabolite biosynthesis. Its function is as follows. Trans-enoyl reductase; part of the gene cluster that mediates the biosynthesis of oxaleimides, cytotoxic compounds containing an unusual disubstituted succinimide moiety. The first step of the pathway is provided by the HR-PKS poxF that serves in a new mode of collaborative biosynthesis with the PKS-NRPS poxE, by providing the olefin containing amino acid substrate via the synthesis of an ACP-bound dec-4-enoate. The cytochrome P450 monooxygenase poxM-catalyzed oxidation at the alpha-position creates the enzyme-bound 2-hydroxydec-4-enoyl-ACP thioester, which may be prone to spontaneous hydrolysis to yield 2-hydroxydec-4-enoic acid due to increased electrophilicity of the carbonyl. 2-hydroxydec-4-enoic acid can then be further oxidized by poxM to yield the alpha-ketoacid 2-oxodec-4-enoicacid, which is reductively aminated by the aminotransferase poxL to yield (S,E)-2-aminodec-4-enoic acid. The Hybrid PKS-NRPS synthetase poxE then performs condensation between the octaketide product of its PKS modules and the amino group of (S,E)-2-aminodec-4-enoic acid which is activated and incorporated by the adenylation domain. The resulting aminoacyl product can be cyclized by the Diels-Alderase PoxQ and reductively released by the reductive (R) domain of poxE to yield an aldehyde intermediate. The released aldehyde is then substrate for a Knoevenagel condensation by the hydrolyase poxO followed by an oxidation at the 5-position of the pyrrolidone ring. The presence of the olefin from the amino acid building block allows for migration of the substituted allyl group to occur. This allylic transposition reaction takes place in a conjugate addition, semipinacol-like fashion to yield a succinimide intermediate. Iterative two-electron oxidations of the C7 methyl of the succinimide intermediate to the carboxylic acid can be catalyzed by one of two remaining cytochrome P450 monooxygenasess poxC or poxD to yield oxaleimide A. Subsequent oxidation yields the maleimide scaffold oxaleimide I. Both oxaleimide A and oxaleimide I can undergo oxidative modifications in the decalin ring to yield the series of products oxaleimides B to H. The sequence is that of Trans-enoyl reductase poxH from Penicillium oxalicum (strain 114-2 / CGMCC 5302) (Penicillium decumbens).